A 401-amino-acid polypeptide reads, in one-letter code: Glycerol-3-phosphate dehydrogenase [NAD(+)] 1 (401 aa).

NAD(+)-binding positions include 40–45, phenylalanine 128, lysine 151, and alanine 184; that span reads GSGNWG. Position 151 (lysine 151) interacts with substrate. Lysine 244 serves as the catalytic Proton acceptor. Arginine 309 and glutamine 338 together coordinate NAD(+). 309-310 lines the substrate pocket; sequence RN.

It belongs to the NAD-dependent glycerol-3-phosphate dehydrogenase family.

Its subcellular location is the cytoplasm. The catalysed reaction is sn-glycerol 3-phosphate + NAD(+) = dihydroxyacetone phosphate + NADH + H(+). This Zygosaccharomyces rouxii protein is Glycerol-3-phosphate dehydrogenase [NAD(+)] 1 (GPD1).